Reading from the N-terminus, the 601-residue chain is Tubulin polyglutamylase ttll-4 (601 aa).

Polar residues predominate over residues 1-18 (MSSGYSSAPSVSHTSSDT). Positions 1–37 (MSSGYSSAPSVSHTSSDTDLNRIDSYDDGAEETTDEQ) are disordered. One can recognise a TTL domain in the interval 138–476 (QARLTWCHNS…YVPPSFDKLS (339 aa)). ATP contacts are provided by residues Lys254, 260–261 (RG), 282–285 (QHYI), and 295–297 (KFD). Arg260 contacts a protein. Arg321 lines the L-glutamate pocket. 342-343 (TN) is an ATP binding site. Tyr344, Ser345, and Lys362 together coordinate L-glutamate. 3 residues coordinate Mg(2+): Asp422, Glu435, and Asn437. Position 453 (Lys453) interacts with L-glutamate.

Belongs to the tubulin--tyrosine ligase family. The cofactor is Mg(2+). As to expression, expressed in many sensory neurons in amphid.

It carries out the reaction L-glutamyl-[protein] + L-glutamate + ATP = gamma-L-glutamyl-L-glutamyl-[protein] + ADP + phosphate + H(+). In terms of biological role, monoglutamylase which modifies tubulin, adding a single glutamate on the gamma-carboxyl group of specific glutamate residues of target proteins. Involved in the side-chain initiation step of the polyglutamylation reaction but not in the elongation step. Preferentially modifies beta-tail tubulin over the alpha-tubulin. Involved in side-chain glutamylation of tubulin in sensory cilia. Together with ttll-5 and ttll-11, required for male mating. In Caenorhabditis elegans, this protein is Tubulin polyglutamylase ttll-4.